Reading from the N-terminus, the 302-residue chain is Diacetylchitobiose uptake system permease protein NgcG (302 aa).

6 helical membrane-spanning segments follow: residues 40-60 (LLIL…MSSF), 99-119 (VIVV…CAYV), 131-151 (IYYV…VPLF), 166-186 (LILT…YSFF), 221-241 (AAVA…PVAL), and 268-288 (GALF…YCVF). The ABC transmembrane type-1 domain maps to 95 to 288 (FLNSVIVVVS…VPVLLVYCVF (194 aa)).

This sequence belongs to the binding-protein-dependent transport system permease family. In terms of assembly, the complex is composed of two ATP-binding proteins (MsiK), two transmembrane proteins (NgcF and NgcG) and a solute-binding protein (NgcE).

It is found in the cell membrane. In terms of biological role, part of the ABC transporter complex NgcEFG-MsiK involved in N,N'-diacetylchitobiose ((GlcNAc)2) uptake. Responsible for the translocation of the substrate across the membrane. This is Diacetylchitobiose uptake system permease protein NgcG from Streptomyces coelicolor (strain ATCC BAA-471 / A3(2) / M145).